The following is a 747-amino-acid chain: Meprin A subunit alpha (747 aa).

A signal peptide spans M1 to A20. A propeptide spanning residues V21–R64 is cleaved from the precursor. 2 N-linked (GlcNAc...) asparagine glycosylation sites follow: N28 and N139. Positions N65–T259 constitute a Peptidase M12A domain. The Extracellular segment spans residues N65 to M713. 3 disulfide bridges follow: C106–C258, C127–C146, and C268–C430. H154 contacts Zn(2+). The active site involves E155. H158 and H164 together coordinate Zn(2+). N221, N257, N317, N413, N439, N533, and N540 each carry an N-linked (GlcNAc...) asparagine glycan. Residues T263–A432 form the MAM domain. The MATH domain maps to G433–F594. The disordered stretch occupies residues E638–E663. Residues F671–Q711 form the EGF-like domain. 3 cysteine pairs are disulfide-bonded: C675–C686, C680–C695, and C697–C710. The helical transmembrane segment at H714 to T741 threads the bilayer. The Cytoplasmic portion of the chain corresponds to N742–Q747.

Homotetramer consisting of disulfide-linked alpha subunits, homooligomer consisting of disulfide-linked alpha subunit homodimers, or heterotetramer of two alpha and two beta subunits formed by non-covalent association of two disulfide-linked heterodimers. Genetic factors determine which oligomer(s) will be formed (strain-specific). Interacts with MBL2 through its carbohydrate moiety. This interaction may inhibit its catalytic activity. Zn(2+) is required as a cofactor. N-glycosylated; contains GlcNAc, galactose, mannose and a small amount of fucose. In terms of tissue distribution, kidney, intestinal brush borders and salivary ducts.

The protein resides in the membrane. It catalyses the reaction Hydrolysis of protein and peptide substrates preferentially on carboxyl side of hydrophobic residues.. Inhibited by metal ion chelators EDTA and 1,10-phenanthroline, bradykinin analogs, cysteine, CONA65, and several hydroxamate compounds, particularly tyrosine hydroxamate. Not inhibited by 3,4-dichloroisocourmarin, soybean trypsin inhibitor, or the cysteine proteinase inhibitors iodoacetic acid and E-64. This Mus musculus (Mouse) protein is Meprin A subunit alpha (Mep1a).